The primary structure comprises 604 residues: Elongation factor 4 (604 aa).

In terms of domain architecture, tr-type G spans 8-190 (KNKRNFSIIA…AIVHRIPAPN (183 aa)). GTP-binding positions include 20-25 (DHGKST) and 137-140 (NKID).

This sequence belongs to the TRAFAC class translation factor GTPase superfamily. Classic translation factor GTPase family. LepA subfamily.

Its subcellular location is the cell inner membrane. The catalysed reaction is GTP + H2O = GDP + phosphate + H(+). Functionally, required for accurate and efficient protein synthesis under certain stress conditions. May act as a fidelity factor of the translation reaction, by catalyzing a one-codon backward translocation of tRNAs on improperly translocated ribosomes. Back-translocation proceeds from a post-translocation (POST) complex to a pre-translocation (PRE) complex, thus giving elongation factor G a second chance to translocate the tRNAs correctly. Binds to ribosomes in a GTP-dependent manner. The sequence is that of Elongation factor 4 from Fusobacterium nucleatum subsp. nucleatum (strain ATCC 25586 / DSM 15643 / BCRC 10681 / CIP 101130 / JCM 8532 / KCTC 2640 / LMG 13131 / VPI 4355).